We begin with the raw amino-acid sequence, 102 residues long: Small ribosomal subunit protein uS10 (102 aa).

Belongs to the universal ribosomal protein uS10 family. In terms of assembly, part of the 30S ribosomal subunit.

Its function is as follows. Involved in the binding of tRNA to the ribosomes. The protein is Small ribosomal subunit protein uS10 of Clostridium novyi (strain NT).